Consider the following 936-residue polypeptide: MSLEEKEMKYRISDIARELQVSPQEVLHFVKQEGAKVASTSSMVKSDMRELILGHFSDEKRLVDQTRKIREEKRQRLTRLEEQSRKTYEKEQQLKDSIAVFPEPGPVLKKDHVHEEPEKPAIVISESEPEVEPEVEPEQPAAAQEAEEAVPTEAVSVPEPVEQERVVPAPEKPEAEKPVPEQSSTMKAQASPEMQVTYEKPKNIGGLTVLGSIDVRSALDRGSESDRKKKNRKKRFKEQADELKGEFENAGKAEGDKKPAKSGEAKTKAPKKAAGTTGSAAEDTTSSKKKKGGKKKKPAVDEKVISQNIRSTISGMDDSSGGSGSRQKFRKMRKIEREKELEAAEAVKEAERSIVRVTEFATAHELADLMGITAKEIIQRCFTLGKFVTINQRLDKETIELVALEFGFEAEFVSEVEATEVFEVHDDSEDLEIRPPVVTIMGHVDHGKTSLLDYIRSSNVVAGESGGITQHIGAYEVTLDNGRSITFLDTPGHEAFTAMRARGAQVTDIVILVVAADDSVMPQTIEAINHSKAANVPIVVAINKIDKPEANPEKIRAQLSEAGVLVEDWGGEYQCQEISAKQGMGMHELMEKVLMEAEIRELKANFSREANSRGIIVESELDKGKGVISTVLVQRGFLKVGDPFVAGNTMGRVRALMDERGRRIKEAGPSQPVRVLGFEDLPQSGDEFVVMPTDKEAREIAQKRQIIRREHEFRRSTRVKLDSIARQIKEGLMKELSVIIKADTDGSIQALADGLMKIHNEEVKVQIIHQGVGQITETDVLLAAASDAIIIGFRVRPNVNAKRLAEKEDLDVRFYSVIYHVIEEIEQALEGMLSPELHEESLGSLEIRQVFRVPKIGNVGGCYMLEGKIFRDSKVRLLREGVQIYDGVLDSLKRFKDDVKEVDAGYECGLNLKGYGDIKVGDIVEAYRIVEKKRKL.

The interval 102–332 is disordered; the sequence is PEPGPVLKKD…SGSRQKFRKM (231 aa). A compositionally biased stretch (basic and acidic residues) spans 108 to 119; sequence LKKDHVHEEPEK. The span at 127–137 shows a compositional bias: acidic residues; the sequence is SEPEVEPEVEP. Over residues 151 to 160 the composition is skewed to low complexity; the sequence is PTEAVSVPEP. Polar residues predominate over residues 182-194; the sequence is QSSTMKAQASPEM. Composition is skewed to basic and acidic residues over residues 217-227 and 237-267; these read SALDRGSESDR and KEQA…EAKT. The segment covering 272-281 has biased composition (low complexity); sequence KAAGTTGSAA. The span at 287–297 shows a compositional bias: basic residues; that stretch reads SKKKKGGKKKK. The tr-type G domain occupies 433–603; the sequence is IRPPVVTIMG…LMEAEIRELK (171 aa). Residues 442–449 are G1; it reads GHVDHGKT. Residue 442–449 participates in GTP binding; the sequence is GHVDHGKT. The G2 stretch occupies residues 467–471; it reads GITQH. The G3 stretch occupies residues 489–492; that stretch reads DTPG. GTP contacts are provided by residues 489–493 and 543–546; these read DTPGH and NKID. The G4 stretch occupies residues 543-546; the sequence is NKID. The segment at 579–581 is G5; it reads SAK.

This sequence belongs to the TRAFAC class translation factor GTPase superfamily. Classic translation factor GTPase family. IF-2 subfamily.

It localises to the cytoplasm. In terms of biological role, one of the essential components for the initiation of protein synthesis. Protects formylmethionyl-tRNA from spontaneous hydrolysis and promotes its binding to the 30S ribosomal subunits. Also involved in the hydrolysis of GTP during the formation of the 70S ribosomal complex. The protein is Translation initiation factor IF-2 of Prosthecochloris aestuarii (strain DSM 271 / SK 413).